The following is a 248-amino-acid chain: Large ribosomal subunit protein uL4 (248 aa).

2 disordered regions span residues 72–103 (RSEN…KSLN) and 173–210 (GRSV…RNLS). The span at 92–103 (PKAEKDQTKSLN) shows a compositional bias: basic and acidic residues. The segment covering 177–189 (RAGRGKTRGRKYS) has biased composition (basic residues).

The protein belongs to the universal ribosomal protein uL4 family. In terms of assembly, part of the 50S ribosomal subunit.

Functionally, one of the primary rRNA binding proteins, this protein initially binds near the 5'-end of the 23S rRNA. It is important during the early stages of 50S assembly. It makes multiple contacts with different domains of the 23S rRNA in the assembled 50S subunit and ribosome. In terms of biological role, forms part of the polypeptide exit tunnel. The chain is Large ribosomal subunit protein uL4 from Halorubrum lacusprofundi (strain ATCC 49239 / DSM 5036 / JCM 8891 / ACAM 34).